Consider the following 380-residue polypeptide: Alcohol dehydrogenase 1 (380 aa).

The Zn(2+) site is built by Cys48, Thr50, His70, Cys100, Cys103, Cys106, Cys114, and Cys178. Thr50 and His70 together coordinate an alcohol. Thr50 provides a ligand contact to NAD(+). NAD(+) contacts are provided by residues 203–208 (GLGAVG), Asp227, Arg232, Thr273, Val296, 296–298 (VGV), and Arg373.

The protein belongs to the zinc-containing alcohol dehydrogenase family. In terms of assembly, homodimer. It depends on Zn(2+) as a cofactor.

The protein localises to the cytoplasm. It catalyses the reaction a primary alcohol + NAD(+) = an aldehyde + NADH + H(+). The catalysed reaction is a secondary alcohol + NAD(+) = a ketone + NADH + H(+). The sequence is that of Alcohol dehydrogenase 1 (ADH1) from Trifolium repens (Creeping white clover).